A 402-amino-acid chain; its full sequence is Putative F-box protein At3g20030 (402 aa).

One can recognise an F-box domain in the interval 1–56; that stretch reads MTMMSDLSQDLLEEILSRVPRTSLGAVRSTCKRWNTLFKDRILCKAEETRDQFRFI.

The protein is Putative F-box protein At3g20030 of Arabidopsis thaliana (Mouse-ear cress).